The primary structure comprises 342 residues: Dihydroorotase (342 aa).

The Zn(2+) site is built by His-13 and His-15. Residues 15 to 17 and Asn-41 each bind substrate; that span reads HLR. Positions 97, 134, and 172 each coordinate Zn(2+). At Lys-97 the chain carries N6-carboxylysine. Residue His-134 coordinates substrate. Residue Leu-217 participates in substrate binding. Residue Asp-245 coordinates Zn(2+). Asp-245 is a catalytic residue. Substrate is bound by residues His-249 and Ala-261.

Belongs to the metallo-dependent hydrolases superfamily. DHOase family. Class II DHOase subfamily. As to quaternary structure, homodimer. It depends on Zn(2+) as a cofactor.

It carries out the reaction (S)-dihydroorotate + H2O = N-carbamoyl-L-aspartate + H(+). The protein operates within pyrimidine metabolism; UMP biosynthesis via de novo pathway; (S)-dihydroorotate from bicarbonate: step 3/3. Catalyzes the reversible cyclization of carbamoyl aspartate to dihydroorotate. In Shewanella loihica (strain ATCC BAA-1088 / PV-4), this protein is Dihydroorotase.